Reading from the N-terminus, the 75-residue chain is Small ribosomal subunit protein bS18 (75 aa).

Belongs to the bacterial ribosomal protein bS18 family. Part of the 30S ribosomal subunit. Forms a tight heterodimer with protein bS6.

In terms of biological role, binds as a heterodimer with protein bS6 to the central domain of the 16S rRNA, where it helps stabilize the platform of the 30S subunit. The chain is Small ribosomal subunit protein bS18 from Acinetobacter baylyi (strain ATCC 33305 / BD413 / ADP1).